A 273-amino-acid polypeptide reads, in one-letter code: Translation initiation factor IF-3, mitochondrial (273 aa).

A mitochondrion-targeting transit peptide spans 1 to 32 (MAALFLKKLTLQTVKTENYCIRRCLGKYILQG). Positions 33 to 92 (PAPTQQPPRPSCLIHAKAFSTEDTQDEMTKKKKNETAFSSVGRKINERIIHVLDEQGNDL) are cleaved as a propeptide — removed in mature form. A disordered region spans residues 242–273 (EEAAWKAAPDTPRRDALNGGDGKDGASGVLPQ). A compositionally biased stretch (basic and acidic residues) spans 252 to 265 (TPRRDALNGGDGKD).

It belongs to the IF-3 family.

The protein localises to the mitochondrion. Its function is as follows. IF-3 binds to the 28S ribosomal subunit and shifts the equilibrium between 55S ribosomes and their 39S and 28S subunits in favor of the free subunits, thus enhancing the availability of 28S subunits on which protein synthesis initiation begins. The polypeptide is Translation initiation factor IF-3, mitochondrial (MTIF3) (Bos taurus (Bovine)).